Reading from the N-terminus, the 546-residue chain is Glucose-6-phosphate isomerase (546 aa).

The active-site Proton donor is E357. Active-site residues include H389 and K509.

It belongs to the GPI family.

The protein localises to the cytoplasm. The enzyme catalyses alpha-D-glucose 6-phosphate = beta-D-fructose 6-phosphate. It functions in the pathway carbohydrate biosynthesis; gluconeogenesis. The protein operates within carbohydrate degradation; glycolysis; D-glyceraldehyde 3-phosphate and glycerone phosphate from D-glucose: step 2/4. Catalyzes the reversible isomerization of glucose-6-phosphate to fructose-6-phosphate. This is Glucose-6-phosphate isomerase from Anaeromyxobacter sp. (strain K).